A 572-amino-acid chain; its full sequence is Linalool synthase TPS2, chloroplastic (572 aa).

A chloroplast-targeting transit peptide spans 1-27; sequence EVEEPKTKISASTAEASSSRISSAKMT. Residues 1-45 form a disordered region; it reads EVEEPKTKISASTAEASSSRISSAKMTADGTIKLGDQSPLKQSEK. Over residues 8-28 the composition is skewed to low complexity; it reads KISASTAEASSSRISSAKMTA. (2E)-geranyl diphosphate contacts are provided by Arg284, Asp321, Asp325, Arg462, and Asn465. Mg(2+) is bound by residues Asp321 and Asp325. Residues 321–325 carry the DDXXD motif motif; that stretch reads DDVYD. Mg(2+) contacts are provided by Asn465, Thr469, and Ser473.

It belongs to the terpene synthase family. Tpsb subfamily. As to quaternary structure, monomer. Mg(2+) is required as a cofactor. Requires Mn(2+) as cofactor. Expressed in flowers and fruits.

It is found in the plastid. The protein localises to the chloroplast. The catalysed reaction is (2E)-geranyl diphosphate = beta-myrcene + diphosphate. It carries out the reaction (2E)-geranyl diphosphate + H2O = linalool + diphosphate. The enzyme catalyses (2E)-geranyl diphosphate = (Z)-beta-ocimene + diphosphate. It catalyses the reaction (2E)-geranyl diphosphate = (E)-beta-ocimene + diphosphate. The protein operates within secondary metabolite biosynthesis; terpenoid biosynthesis. In terms of biological role, monoterpene synthase (mono-TPS) involved in the biosynthesis of monoterpenes natural products, constituent of coffee beverage aroma. Catalyzes the conversion of (2E)-geranyl diphosphate (GPP) into linalool and beta-myrcene, and, as minor products, cis-ocimene and trans-ocimene. Not able to use geranylgeranyl pyrophosphate (GGPP) and farnesyl pyrophosphate (FPP) as substrates. The protein is Linalool synthase TPS2, chloroplastic of Coffea arabica (Arabian coffee).